Consider the following 132-residue polypeptide: Small ribosomal subunit protein uS9 (132 aa).

It belongs to the universal ribosomal protein uS9 family.

This Thermoplasma volcanium (strain ATCC 51530 / DSM 4299 / JCM 9571 / NBRC 15438 / GSS1) protein is Small ribosomal subunit protein uS9 (rps9).